Consider the following 689-residue polypeptide: Glycine--tRNA ligase beta subunit (689 aa).

Belongs to the class-II aminoacyl-tRNA synthetase family. In terms of assembly, tetramer of two alpha and two beta subunits.

The protein resides in the cytoplasm. The catalysed reaction is tRNA(Gly) + glycine + ATP = glycyl-tRNA(Gly) + AMP + diphosphate. The polypeptide is Glycine--tRNA ligase beta subunit (Aeromonas salmonicida (strain A449)).